Here is a 526-residue protein sequence, read N- to C-terminus: 2-succinyl-5-enolpyruvyl-6-hydroxy-3-cyclohexene-1-carboxylate synthase (526 aa).

Belongs to the TPP enzyme family. MenD subfamily. As to quaternary structure, homodimer. Mg(2+) is required as a cofactor. Requires Mn(2+) as cofactor. It depends on thiamine diphosphate as a cofactor.

The enzyme catalyses isochorismate + 2-oxoglutarate + H(+) = 5-enolpyruvoyl-6-hydroxy-2-succinyl-cyclohex-3-ene-1-carboxylate + CO2. It participates in quinol/quinone metabolism; 1,4-dihydroxy-2-naphthoate biosynthesis; 1,4-dihydroxy-2-naphthoate from chorismate: step 2/7. The protein operates within quinol/quinone metabolism; menaquinone biosynthesis. Its function is as follows. Catalyzes the thiamine diphosphate-dependent decarboxylation of 2-oxoglutarate and the subsequent addition of the resulting succinic semialdehyde-thiamine pyrophosphate anion to isochorismate to yield 2-succinyl-5-enolpyruvyl-6-hydroxy-3-cyclohexene-1-carboxylate (SEPHCHC). This chain is 2-succinyl-5-enolpyruvyl-6-hydroxy-3-cyclohexene-1-carboxylate synthase, found in Bdellovibrio bacteriovorus (strain ATCC 15356 / DSM 50701 / NCIMB 9529 / HD100).